The chain runs to 352 residues: Ly6/PLAUR domain-containing protein 3 (352 aa).

Residues 1 to 32 (MDAARRGDTQPVMWTTRWLLLLPLLLCEGAQA) form the signal peptide. The UPAR/Ly6 1 domain maps to 35–128 (CYSCVQKADD…LNLTLRGLNP (94 aa)). N-linked (GlcNAc...) asparagine glycosylation is found at Asn-120, Asn-131, Asn-178, and Asn-185. The region spanning 142–224 (CYSCMGLSRE…GSCCQGPRCN (83 aa)) is the UPAR/Ly6 2 domain. Residues 236-249 (RIPPLVLLPPPTTP) show a composition bias toward pro residues. The segment at 236–330 (RIPPLVLLPP…KGGAQIPSKG (95 aa)) is disordered. Low complexity predominate over residues 250–285 (APSTRTQNSSSTTSTTAPTTATTTIKPTTVQASHTS). Composition is skewed to basic and acidic residues over residues 286–300 (STHETEHEVIQEEGS) and 309–320 (HQDRSNMGKFPE). Gly-330 carries the GPI-anchor amidated glycine lipid modification. The propeptide at 331–352 (GSDALGSWLSAILLTVVAGAML) is removed in mature form.

Interacts with AGR2 and AGR3. Binds laminin-1 and laminin-5. Interacts with LGALS3. As to expression, found predominantly on the basal layers of squamous epithelium. Expressed in the gravid uterus and on epithelial of the upper gastrointestinal tract. It has been found in tumor lines which metastasize via the lymphatic system.

The protein localises to the cell membrane. Supports cell migration. May be involved in tumor progression. The chain is Ly6/PLAUR domain-containing protein 3 (Lypd3) from Rattus norvegicus (Rat).